Here is a 340-residue protein sequence, read N- to C-terminus: uncharacterized protein (340 aa).

A helical transmembrane segment spans residues 6–26 (ITFGLLVLMVCVILFVLYVQL).

It localises to the cell membrane. This is an uncharacterized protein from Bacillus subtilis (strain 168).